The primary structure comprises 311 residues: Methionyl-tRNA formyltransferase (311 aa).

110 to 113 (SLLP) is a binding site for (6S)-5,6,7,8-tetrahydrofolate.

Belongs to the Fmt family.

The enzyme catalyses L-methionyl-tRNA(fMet) + (6R)-10-formyltetrahydrofolate = N-formyl-L-methionyl-tRNA(fMet) + (6S)-5,6,7,8-tetrahydrofolate + H(+). Functionally, attaches a formyl group to the free amino group of methionyl-tRNA(fMet). The formyl group appears to play a dual role in the initiator identity of N-formylmethionyl-tRNA by promoting its recognition by IF2 and preventing the misappropriation of this tRNA by the elongation apparatus. The chain is Methionyl-tRNA formyltransferase from Streptococcus pyogenes serotype M3 (strain ATCC BAA-595 / MGAS315).